Here is a 241-residue protein sequence, read N- to C-terminus: Probable transcriptional regulatory protein lmo1535 (241 aa).

The span at 1–14 (MSGHSKWNNIQGRK) shows a compositional bias: polar residues. The interval 1–22 (MSGHSKWNNIQGRKNAQDSKRS) is disordered.

Belongs to the TACO1 family.

Its subcellular location is the cytoplasm. The polypeptide is Probable transcriptional regulatory protein lmo1535 (Listeria monocytogenes serovar 1/2a (strain ATCC BAA-679 / EGD-e)).